A 259-amino-acid polypeptide reads, in one-letter code: Methyltransferase sdnD (259 aa).

The protein belongs to the FkbM methyltransferase family.

Its pathway is antibiotic biosynthesis. Methyltransferase; part of the gene cluster that mediates the biosynthesis of sordarin and hypoxysordarin, glycoside antibiotics with a unique tetracyclic diterpene aglycone structure. First, the geranylgeranyl diphosphate synthase sdnC constructs GGDP from farnesyl diphosphate and isopentenyl diphosphate. The diterpene cyclase sdnA then catalyzes the cyclization of GGDP to afford cycloaraneosene. Cycloaraneosene is then hydroxylated four times by the putative cytochrome P450 monooxygenases sdnB, sdnE, sdnF and sdnH to give a hydroxylated cycloaraneosene derivative such as cycloaraneosene-8,9,13,19-tetraol. Although the order of the hydroxylations is unclear, at least C8, C9 and C13 of the cycloaraneosene skeleton are hydroxylated before the sordaricin formation. Dehydration of the 13-hydroxy group of the hydroxylated cycloaraneosene derivative might be catalyzed by an unassigned hypothetical protein such as sdnG and sdnP to construct the cyclopentadiene moiety. The FAD-dependent oxidoreductase sdnN is proposed to catalyze the oxidation at C9 of the hydroxylated cycloaraneosene derivative and also catalyze the Baeyer-Villiger oxidation to give the lactone intermediate. The presumed lactone intermediate would be hydrolyzed to give an acrolein moiety and a carboxylate moiety. Then, [4+2]cycloaddition would occur between the acrolein moiety and the cyclopentadiene moiety to give sordaricin. SdnN might also be involved in the [4+2]cycloaddition after the hypothesized oxidation to accommodate the oxidized product and prompt the [4+2]cycloaddition. GDP-6-deoxy-D-altrose may be biosynthesized from GDP-D-mannose by the putative GDP-mannose-4,6-dehydratase sdnI and the short-chain dehydrogenase sdnK. The glycosyltransferase sdnJ catalyzes the attachment of 6-deoxy-D-altrose onto the 19-hydroxy group of sordaricin to give 4'-O-demethylsordarin. The methyltransferase sdnD would complete the biosynthesis of sordarin. Sordarin can be further modified into hypoxysordarin. The unique acyl chain at the 3'-hydroxy group of hypoxysordarin would be constructed by an iterative type I PKS sdnO and the trans-acting polyketide methyltransferase sdnL. SdnL would be responsible for the introduction of an alpha-methyl group of the polyketide chain. Alternatively, the beta-lactamase-like protein sdnR might be responsible for the cleavage and transfer of the polyketide chain from the PKS sdnO to sordarin. Two putative cytochrome P450 monooxygenases, sdnQ and sdnT, might catalyze the epoxidations of the polyketide chain to complete the biosynthesis of hypoxysordarin. Transcriptional regulators sdnM and sdnS are presumably encoded for the transcriptional regulation of the expression of the sdn gene cluster. The polypeptide is Methyltransferase sdnD (Sordaria araneosa (Pleurage araneosa)).